The following is a 201-amino-acid chain: Peptide deformylase (201 aa).

The tract at residues 1 to 21 is disordered; it reads MANHFSQLAKKSRTNGNAEKI. Residues Cys121 and His163 each coordinate Fe cation. Residue Glu164 is part of the active site. His167 lines the Fe cation pocket.

It belongs to the polypeptide deformylase family. It depends on Fe(2+) as a cofactor.

The enzyme catalyses N-terminal N-formyl-L-methionyl-[peptide] + H2O = N-terminal L-methionyl-[peptide] + formate. Functionally, removes the formyl group from the N-terminal Met of newly synthesized proteins. Requires at least a dipeptide for an efficient rate of reaction. N-terminal L-methionine is a prerequisite for activity but the enzyme has broad specificity at other positions. In Prochlorococcus marinus (strain AS9601), this protein is Peptide deformylase.